Here is a 433-residue protein sequence, read N- to C-terminus: Serine/threonine-protein kinase KDX1 (433 aa).

The Protein kinase domain maps to 23-318; the sequence is FHLTGKIGRG…VEDALEHPYL (296 aa). ATP contacts are provided by residues 29–37 and lysine 55; that span reads IGRGSHSLI. The Proton acceptor role is filled by aspartate 153.

The protein belongs to the protein kinase superfamily. Ser/Thr protein kinase family. In terms of assembly, interacts with RLM1.

The catalysed reaction is L-seryl-[protein] + ATP = O-phospho-L-seryl-[protein] + ADP + H(+). The enzyme catalyses L-threonyl-[protein] + ATP = O-phospho-L-threonyl-[protein] + ADP + H(+). Functionally, serine/threonine-protein kinase involved in the SLT2 mitogen-activated (MAP) kinase signaling pathway that regulates cell wall integrity. May also be involved in the mating pheromone and the CWI MAPK pathways. The protein is Serine/threonine-protein kinase KDX1 (KDX1) of Saccharomyces cerevisiae (strain ATCC 204508 / S288c) (Baker's yeast).